The following is a 561-amino-acid chain: Serine palmitoyltransferase 2 (561 aa).

Residues 57–77 (PYYISLLTYLNYLILIILGHV) traverse the membrane as a helical segment. K366 is modified (N6-(pyridoxal phosphate)lysine). Residues 443-463 (LGFIVYGVADSPVIPLLLYCP) form a helical membrane-spanning segment.

Belongs to the class-II pyridoxal-phosphate-dependent aminotransferase family. As to quaternary structure, LCB1 and LCB2 encode essential subunits of the enzyme and form a heterodimer. Component of the SPOTS complex, at least composed of LCB1/2 (LCB1 and/or LCB2), ORM1/2 (ORM1 and/or ORM2), SAC1 and TSC3. Interacts with LCB1 and TSC3. It depends on pyridoxal 5'-phosphate as a cofactor.

Its subcellular location is the cytoplasm. The protein resides in the endoplasmic reticulum. The protein localises to the membrane. The enzyme catalyses L-serine + hexadecanoyl-CoA + H(+) = 3-oxosphinganine + CO2 + CoA. The protein operates within lipid metabolism; sphingolipid metabolism. Functionally, catalytic subunit of serine palmitoyltransferase (SPT), which catalyzes the committed step in the synthesis of sphingolipids, the condensation of serine with palmitoyl CoA to form the long chain base 3-ketosphinganine. This is Serine palmitoyltransferase 2 (LCB2) from Saccharomyces cerevisiae (strain ATCC 204508 / S288c) (Baker's yeast).